We begin with the raw amino-acid sequence, 396 residues long: Large ribosomal subunit protein uL4A (396 aa).

Positions 352-373 (KAKEKKPDDGKPKAKKPLDAKT) are enriched in basic and acidic residues. The disordered stretch occupies residues 352–374 (KAKEKKPDDGKPKAKKPLDAKTK).

This sequence belongs to the universal ribosomal protein uL4 family. In terms of assembly, component of the large ribosomal subunit.

The protein localises to the cytoplasm. Component of the large ribosomal subunit. The ribosome is a large ribonucleoprotein complex responsible for the synthesis of proteins in the cell. The chain is Large ribosomal subunit protein uL4A (rpl4-a) from Xenopus laevis (African clawed frog).